A 483-amino-acid chain; its full sequence is Islet cell autoantigen 1 (483 aa).

The region spanning 51–254 (ASDADLDAKL…TSHTMAAIHE (204 aa)) is the AH domain. Residues 281–321 (EEKKKINQQESTDAAVQEPSQLISLEEENQRKESSSFKTED) form a disordered region. Positions 288–303 (QQESTDAAVQEPSQLI) are enriched in polar residues. Basic and acidic residues predominate over residues 308–321 (ENQRKESSSFKTED).

In terms of tissue distribution, expressed abundantly in pancreas, heart and brain with low levels of expression in lung, kidney, liver and thyroid.

The protein localises to the cytoplasm. It is found in the cytosol. Its subcellular location is the golgi apparatus membrane. It localises to the cytoplasmic vesicle. The protein resides in the secretory vesicle membrane. The protein localises to the secretory vesicle. It is found in the synaptic vesicle membrane. Functionally, may play a role in neurotransmitter secretion. The chain is Islet cell autoantigen 1 (ICA1) from Homo sapiens (Human).